The primary structure comprises 227 residues: 27 kDa glycoprotein (227 aa).

An N-terminal signal peptide occupies residues 1–17 (MMWKTVLITIFAAGVLA). N-linked (GlcNAc...) asparagine glycosylation is found at Asn118 and Asn173.

This sequence belongs to the UPF0408 family. In terms of tissue distribution, expressed in the subesophageal body, fat bodies, hemocytes, midgut and Malpighian tubules. Not expressed in silk glands.

The protein resides in the secreted. The chain is 27 kDa glycoprotein from Bombyx mori (Silk moth).